A 479-amino-acid chain; its full sequence is Glutathione gamma-glutamylcysteinyltransferase 3 (479 aa).

One can recognise a Peptidase C83 domain in the interval 1 to 221 (MASAGLYRRV…GYMIISKLKR (221 aa)). Active-site residues include Cys56, His162, and Asp180.

This sequence belongs to the phytochelatin synthase family. Expressed in roots, nodules and leaves.

The enzyme catalyses [Glu(-Cys)](n)-Gly + glutathione + H(+) = [Glu(-Cys)](n+1)-Gly + glycine. With respect to regulation, requires cadmium for activity. In terms of biological role, involved in the synthesis of phytochelatins (PC) and homophytochelatins (hPC), the heavy-metal-binding peptides of plants. The chain is Glutathione gamma-glutamylcysteinyltransferase 3 (PCS3) from Lotus japonicus (Lotus corniculatus var. japonicus).